Consider the following 361-residue polypeptide: Chorismate synthase (361 aa).

The NADP(+) site is built by Arg48 and Arg54. FMN-binding positions include 125-127 (RSS), 238-239 (NA), Gly278, 293-297 (KPTSS), and Arg319.

This sequence belongs to the chorismate synthase family. As to quaternary structure, homotetramer. The cofactor is FMNH2.

The catalysed reaction is 5-O-(1-carboxyvinyl)-3-phosphoshikimate = chorismate + phosphate. Its pathway is metabolic intermediate biosynthesis; chorismate biosynthesis; chorismate from D-erythrose 4-phosphate and phosphoenolpyruvate: step 7/7. In terms of biological role, catalyzes the anti-1,4-elimination of the C-3 phosphate and the C-6 proR hydrogen from 5-enolpyruvylshikimate-3-phosphate (EPSP) to yield chorismate, which is the branch point compound that serves as the starting substrate for the three terminal pathways of aromatic amino acid biosynthesis. This reaction introduces a second double bond into the aromatic ring system. The sequence is that of Chorismate synthase from Klebsiella pneumoniae subsp. pneumoniae (strain ATCC 700721 / MGH 78578).